The primary structure comprises 500 residues: Formate-nitrite transporter 3 (500 aa).

The Cytoplasmic portion of the chain corresponds to 1–31 (MVLAASPEAYRKVIEYGIKKTKLRIDRLFLQ). The chain crosses the membrane as a helical span at residues 32–52 (AIMAGIYVGMAGHACTALAGA). The Extracellular portion of the chain corresponds to 53–69 (YSTDPANPLAVSKATQK). A helical transmembrane segment spans residues 70-90 (FLYASLFPVAFIAIIFTGAEL). Topologically, residues 91-113 (FTGNTMTMLVCLLERRVTALQLC) are cytoplasmic. Residues 114–134 (INWICSLVGNWAGALFAAYFL) traverse the membrane as a helical segment. At 135 to 164 (SYLPGVLQDPDHLHYLEDVAAHKTELSFLQ) the chain is on the extracellular side. A helical transmembrane segment spans residues 165 to 185 (CFCLAVGCNTFVCLAVWFVIA). Residues 186–192 (SDDAAGK) lie on the Cytoplasmic side of the membrane. Residues 193–213 (IMSMWFPIVSFCVAGYEHIIA) traverse the membrane as a helical segment. Topologically, residues 214 to 237 (NFYTLQCALMHGVGPGVGTVILKN) are extracellular. A helical membrane pass occupies residues 238–258 (FIPTLLGNIVGGCGLVGAVYW). Topologically, residues 259–500 (YNFYPTVCVV…ALEEHPASTI (242 aa)) are cytoplasmic. Residues 411-500 (PLRENSGVPS…ALEEHPASTI (90 aa)) are disordered. Basic and acidic residues-rich tracts occupy residues 428-444 (GRVRRSSREREPERGGE) and 466-485 (FHPHVPREVEQSSLLEETRV).

Belongs to the FNT transporter (TC 1.A.16) family. In terms of assembly, homopentamer.

It is found in the cell membrane. It carries out the reaction (S)-lactate(in) + H(+)(in) = (S)-lactate(out) + H(+)(out). The enzyme catalyses formate(in) + H(+)(in) = formate(out) + H(+)(out). The catalysed reaction is pyruvate(out) + H(+)(out) = pyruvate(in) + H(+)(in). It catalyses the reaction acetate(out) + H(+)(out) = acetate(in) + H(+)(in). Inhibited by p-chloromercuribenzene sulfonate (pCMBS). Methyl methanethiosulfonate (MMTS) inhibits L-lactate but not formate transport. Inhibited by the Malaria Box compound MMV007839. Inhibited by BH-296, BH-317, BH-326 and BH-388 compounds. Monocarboxylate-proton symporter; active in acidic-to-neutral pH range. Transports L-lactate and formate. The chain is Formate-nitrite transporter 3 from Toxoplasma gondii (strain ATCC 50611 / Me49).